We begin with the raw amino-acid sequence, 392 residues long: MDLYEYQGRDLFERHGLPVLAGGVATTPEEARAIAERLGGRVVVKAQVKVGGRGKAGGVKLTEGAEETVARATDILGMDIKGHTVHKVMITVTADVAEEYYFSYLLDRANRTFLCIASVAGGMDIEQVAAETPEKVVKEPIDANTGVDVATARRIVTQAGFPAEVADQTVEIAVDLWKAFVAEDATLVEVNPLAKTAEGGLLLLDAKVSLDENAAFRHPDHEALVDQAAVDPLEQAAKEKDLNYVKLDGEVGIIGNGAGLVMSTLDVVAYAGERHGGVKPANFLDIGGGASAAVMANGLEIVLSDPAVKSVFVNVFGGITACDAVANGIVQALALLEQRGEKVTRPLVVRLDGNNAEAGRAILDGANNPLIQRVDTMDGAAERAAELAAAGV.

The region spanning 9–236 (RDLFERHGLP…QAAVDPLEQA (228 aa)) is the ATP-grasp domain. ATP is bound by residues Lys-45, 52–54 (GRG), Ala-94, and Glu-99. Asn-191 and Asp-205 together coordinate Mg(2+). Substrate contacts are provided by residues Asn-256 and 318–320 (GIT).

The protein belongs to the succinate/malate CoA ligase beta subunit family. As to quaternary structure, heterotetramer of two alpha and two beta subunits. Mg(2+) is required as a cofactor.

It catalyses the reaction succinate + ATP + CoA = succinyl-CoA + ADP + phosphate. The enzyme catalyses GTP + succinate + CoA = succinyl-CoA + GDP + phosphate. It functions in the pathway carbohydrate metabolism; tricarboxylic acid cycle; succinate from succinyl-CoA (ligase route): step 1/1. Functionally, succinyl-CoA synthetase functions in the citric acid cycle (TCA), coupling the hydrolysis of succinyl-CoA to the synthesis of either ATP or GTP and thus represents the only step of substrate-level phosphorylation in the TCA. The beta subunit provides nucleotide specificity of the enzyme and binds the substrate succinate, while the binding sites for coenzyme A and phosphate are found in the alpha subunit. This Salinispora tropica (strain ATCC BAA-916 / DSM 44818 / JCM 13857 / NBRC 105044 / CNB-440) protein is Succinate--CoA ligase [ADP-forming] subunit beta.